The following is a 197-amino-acid chain: Regulator of free ubiquitin chains 1 (197 aa).

This sequence belongs to the RFU1 family.

The protein localises to the endosome. Functionally, inhibitor of the DOA4 deubiquitinase involved in the regulation of protein degradation by the proteasome and maintenance of a normal level of free ubiquitin. In Vanderwaltozyma polyspora (strain ATCC 22028 / DSM 70294 / BCRC 21397 / CBS 2163 / NBRC 10782 / NRRL Y-8283 / UCD 57-17) (Kluyveromyces polysporus), this protein is Regulator of free ubiquitin chains 1 (RFU1).